We begin with the raw amino-acid sequence, 476 residues long: MAVPFVEDWDLVQTLGEGAYGEVQLAVNRITEEAVAVKIVDMKRAIDCPENIKKEICINKMLNHENVVKFYGHRREGNIQYLFLEYCSGGELFDRIEPDIGMPEQDAQRFFHQLMAGVVYLHGIGITHRDIKPENLLLDERDNLKISDFGLATVFRHNNRERLLNKMCGTLPYVAPELLKRKEFHAEPVDVWSCGIVLTAMLAGELPWDQPSDSCQEYSDWKEKKTYLNPWKKIDSAPLALLHKILVENPSARITIPDIKKDRWYNKPLNRGAKRPRATSGGMSESSSGFSKHIHSNLDFSPINSGSSEENVKFSSSQPEPRTGLSLWDTGPSNVDKLVQGISFSQPTCPDHMLVNSQLLGTPGSSQNPWQRLVKRMTRFFTKLDADKSYQCLKETFEKLGYQWKKSCMNQVTVSTMDRRNNKLIFKINLVEMDEKILVDFRLSKGDGLEFKRHFLKIKGKLSDIVSSQKVWFPVT.

The interval 1-265 (MAVPFVEDWD…IPDIKKDRWY (265 aa)) is interaction with CLSPN. The Protein kinase domain occupies 9-265 (WDLVQTLGEG…IPDIKKDRWY (257 aa)). ATP is bound by residues 15 to 23 (LGEGAYGEV) and lysine 38. Aspartate 130 functions as the Proton acceptor in the catalytic mechanism. Lysine 132 is covalently cross-linked (Glycyl lysine isopeptide (Lys-Gly) (interchain with G-Cter in ubiquitin)). A disordered region spans residues 267–329 (KPLNRGAKRP…EPRTGLSLWD (63 aa)). Serine 280 carries the post-translational modification Phosphoserine; by PKB/AKT1. Residues 280 to 291 (SGGMSESSSGFS) are compositionally biased toward low complexity. 3 positions are modified to phosphoserine: serine 286, serine 296, and serine 301. The segment covering 298-320 (LDFSPINSGSSEENVKFSSSQPE) has biased composition (polar residues). 2 positions are modified to phosphoserine; by ATM and ATR: serine 317 and serine 345. The interval 391-476 (QCLKETFEKL…SSQKVWFPVT (86 aa)) is autoinhibitory region. Residue lysine 436 forms a Glycyl lysine isopeptide (Lys-Gly) (interchain with G-Cter in ubiquitin) linkage. A phosphoserine mark is found at serine 463, serine 467, and serine 468.

It belongs to the protein kinase superfamily. CAMK Ser/Thr protein kinase family. NIM1 subfamily. Interacts (phosphorylated by ATR) with RAD51. Interacts with and phosphorylates CLSPN, an adapter protein that regulates the ATR-dependent phosphorylation of CHEK1. Interacts with BRCA1. Interacts with and phosphorylates CDC25A, CDC25B and CDC25C. Interacts with FBXO6, which regulates CHEK1. Interacts with PPM1D, which regulates CHEK1 through dephosphorylation. Interacts with TIMELESS; DNA damage-dependent. Interacts with FEM1B; activates CHEK1 in response to stress. Interacts with TLK1. Interacts with XPO1 and YWHAZ. Interacts with CDK5RAP3; antagonizes CHEK1. In terms of processing, phosphorylated by ATR in a RAD17-dependent manner in response to ultraviolet irradiation and inhibition of DNA replication. Phosphorylated by ATM in response to ionizing irradiation. ATM and ATR can both phosphorylate Ser-317 and Ser-345 and this results in enhanced kinase activity. Phosphorylation at Ser-345 induces a change in the conformation of the protein, activates the kinase activity and is a prerequisite for interaction with FBXO6 and subsequent ubiquitination at Lys-436. Phosphorylation at Ser-345 also increases binding to 14-3-3 proteins and promotes nuclear retention. Conversely, dephosphorylation at Ser-345 by PPM1D may contribute to exit from checkpoint mediated cell cycle arrest. Phosphorylation at Ser-280 by AKT1/PKB, may promote mono and/or diubiquitination. Also phosphorylated at undefined residues during mitotic arrest, resulting in decreased activity. Ubiquitinated. Mono or diubiquitination promotes nuclear exclusion. The activated form (phosphorylated on Ser-345) is polyubiquitinated at Lys-436 by some SCF-type E3 ubiquitin ligase complex containing FBXO6 promoting its degradation. Ubiquitination and degradation are required to terminate the checkpoint and ensure that activated CHEK1 does not accumulate as cells progress through S phase, when replication forks encounter transient impediments during normal DNA replication. 'Lys-63'-mediated ubiquitination by TRAF4 at Lys-132 activates cell cycle arrest and activation of DNA repair. Post-translationally, proteolytically cleaved at the C-terminus by SPRTN during normal DNA replication, thereby promoting CHEK1 removal from chromatin and activating the protein kinase activity. Expressed in brain, heart, liver, lung, skeletal muscle, spleen and testis. As to expression, expressed only in liver.

The protein resides in the nucleus. It is found in the chromosome. Its subcellular location is the cytoplasm. It localises to the cytoskeleton. The protein localises to the microtubule organizing center. The protein resides in the centrosome. It carries out the reaction L-seryl-[protein] + ATP = O-phospho-L-seryl-[protein] + ADP + H(+). It catalyses the reaction L-threonyl-[protein] + ATP = O-phospho-L-threonyl-[protein] + ADP + H(+). Its activity is regulated as follows. Activated through phosphorylation predominantly by ATR but also by ATM in response to DNA damage or inhibition of DNA replication. Activation is modulated by several mediators including CLSPN, BRCA1 and FEM1B. Proteolytic cleavage at the C-terminus by SPRTN during normal DNA replication activates the protein kinase activity. Its function is as follows. Serine/threonine-protein kinase which is required for checkpoint-mediated cell cycle arrest and activation of DNA repair in response to the presence of DNA damage or unreplicated DNA. May also negatively regulate cell cycle progression during unperturbed cell cycles. This regulation is achieved by a number of mechanisms that together help to preserve the integrity of the genome. Recognizes the substrate consensus sequence [R-X-X-S/T]. Binds to and phosphorylates CDC25A, CDC25B and CDC25C. Phosphorylation of CDC25A at 'Ser-178' and 'Thr-507' and phosphorylation of CDC25C at 'Ser-216' creates binding sites for 14-3-3 proteins which inhibit CDC25A and CDC25C. Phosphorylation of CDC25A at 'Ser-76', 'Ser-124', 'Ser-178', 'Ser-279' and 'Ser-293' promotes proteolysis of CDC25A. Phosphorylation of CDC25A at 'Ser-76' primes the protein for subsequent phosphorylation at 'Ser-79', 'Ser-82' and 'Ser-88' by NEK11, which is required for polyubiquitination and degradation of CDCD25A. Inhibition of CDC25 leads to increased inhibitory tyrosine phosphorylation of CDK-cyclin complexes and blocks cell cycle progression. Also phosphorylates NEK6. Binds to and phosphorylates RAD51 at 'Thr-309', which promotes the release of RAD51 from BRCA2 and enhances the association of RAD51 with chromatin, thereby promoting DNA repair by homologous recombination. Phosphorylates multiple sites within the C-terminus of TP53, which promotes activation of TP53 by acetylation and promotes cell cycle arrest and suppression of cellular proliferation. Also promotes repair of DNA cross-links through phosphorylation of FANCE. Binds to and phosphorylates TLK1 at 'Ser-743', which prevents the TLK1-dependent phosphorylation of the chromatin assembly factor ASF1A. This may enhance chromatin assembly both in the presence or absence of DNA damage. May also play a role in replication fork maintenance through regulation of PCNA. May regulate the transcription of genes that regulate cell-cycle progression through the phosphorylation of histones. Phosphorylates histone H3.1 (to form H3T11ph), which leads to epigenetic inhibition of a subset of genes. May also phosphorylate RB1 to promote its interaction with the E2F family of transcription factors and subsequent cell cycle arrest. Phosphorylates SPRTN, promoting SPRTN recruitment to chromatin. Reduces replication stress and activates the G2/M checkpoint, by phosphorylating and inactivating PABIR1/FAM122A and promoting the serine/threonine-protein phosphatase 2A-mediated dephosphorylation and stabilization of WEE1 levels and activity. This is Serine/threonine-protein kinase Chk1 (Chek1) from Rattus norvegicus (Rat).